The sequence spans 192 residues: uncharacterized protein (192 aa).

The 132-residue stretch at 29–160 folds into the Nudix hydrolase domain; sequence QRQAAVLVPI…PLDIHRRGND (132 aa). The Nudix box motif lies at 67–89; the sequence is GAVDNTDATLIAAALREAQEEVA. Residues E83 and E87 each coordinate Mg(2+).

It belongs to the Nudix hydrolase family. PCD1 subfamily. It depends on Mn(2+) as a cofactor. The cofactor is Mg(2+).

In terms of biological role, probably mediates the hydrolysis of some nucleoside diphosphate derivatives. This is an uncharacterized protein from Klebsiella pneumoniae subsp. pneumoniae (strain ATCC 700721 / MGH 78578).